A 194-amino-acid chain; its full sequence is Peptidyl-tRNA hydrolase (194 aa).

Tyrosine 17 serves as a coordination point for tRNA. Catalysis depends on histidine 22, which acts as the Proton acceptor. Positions 69, 71, and 117 each coordinate tRNA.

This sequence belongs to the PTH family. As to quaternary structure, monomer.

The protein resides in the cytoplasm. It catalyses the reaction an N-acyl-L-alpha-aminoacyl-tRNA + H2O = an N-acyl-L-amino acid + a tRNA + H(+). In terms of biological role, hydrolyzes ribosome-free peptidyl-tRNAs (with 1 or more amino acids incorporated), which drop off the ribosome during protein synthesis, or as a result of ribosome stalling. Functionally, catalyzes the release of premature peptidyl moieties from peptidyl-tRNA molecules trapped in stalled 50S ribosomal subunits, and thus maintains levels of free tRNAs and 50S ribosomes. In Arthrobacter sp. (strain FB24), this protein is Peptidyl-tRNA hydrolase.